The chain runs to 315 residues: Protein FRA10AC1 (315 aa).

Met1 carries the post-translational modification N-acetylmethionine. Positions 1–28 (MHGHGGYDSDFSDDERCGESSKRKKRTV) are disordered. Phosphoserine occurs at positions 9 and 12. Lys36 bears the N6-acetyllysine mark. Over residues 226-235 (EIKSKKRKDK) the composition is skewed to basic residues. The segment at 226 to 315 (EIKSKKRKDK…FDEYFQDLFL (90 aa)) is disordered. Positions 236-245 (TKKDCEESSH) are enriched in basic and acidic residues. A phosphoserine mark is found at Ser251, Ser252, Ser278, Ser283, and Ser285. The span at 268–278 (KKSEDSLLRNS) shows a compositional bias: basic and acidic residues. Positions 301-315 (SQEEEFDEYFQDLFL) are enriched in acidic residues.

In terms of assembly, interacts with ESS2. In terms of tissue distribution, ubiquitously expressed with higher expression in brain, heart, skeletal muscle, kidney and liver.

The protein localises to the nucleus. May be involved in pre-mRNA splicing. In Homo sapiens (Human), this protein is Protein FRA10AC1 (FRA10AC1).